Consider the following 369-residue polypeptide: Phosphoribosyl pyrophosphate synthase-associated protein 2 (369 aa).

Met1 is modified (N-acetylmethionine). Position 5 is a phosphothreonine (Thr5). Phosphoserine is present on residues Ser219, Ser227, and Ser233.

The protein belongs to the ribose-phosphate pyrophosphokinase family. Binds to PRPS1 and PRPS2. Ubiquitous.

Functionally, seems to play a negative regulatory role in 5-phosphoribose 1-diphosphate synthesis. The protein is Phosphoribosyl pyrophosphate synthase-associated protein 2 (PRPSAP2) of Homo sapiens (Human).